The chain runs to 53 residues: Small ribosomal subunit protein uS14m (53 aa).

Belongs to the universal ribosomal protein uS14 family.

It localises to the mitochondrion. In Bigelowiella natans (Pedinomonas minutissima), this protein is Small ribosomal subunit protein uS14m (RPS14).